The chain runs to 230 residues: MAVSNSLTISPRKLRSDLYSYSYQNNSKTPLVISVLSSLIDRTLTRNERISRRALPSSGAGGKTQIFDCREIPDMTIQSYLGRIFRYTKAGPSVYVVAYVYIDRFCQTNPGFRISLTNVHRLLITTIMIASKYVEDLNYRNSYFAKVGGLETEDLNKLELEFLFLMGFKLHVNVSVFESYCCHLEREVSFGGGYQIEKALRCAEEIKSRQMIIQDPKHHHHHHQLARILL.

It belongs to the cyclin family. Cyclin U/P subfamily. In terms of assembly, interacts with CDKA-1. Expressed in roots and stems. Expressed in the shoot apex, leaf primordia and young leaves.

The chain is Cyclin-U2-2 (CYCU2-2) from Arabidopsis thaliana (Mouse-ear cress).